The chain runs to 335 residues: LIM and SH3 domain protein F42H10.3 (335 aa).

One can recognise an LIM zinc-binding domain in the interval 5 to 65; that stretch reads CAREDCGKTV…DPHYPKTVAS (61 aa). Nebulin repeat units follow at residues 66–97 and 98–132; these read VMADTPEMRRIAENTKNQSNIKYHAEYEKMKG and TKIEIADDPEMERLKKNTQVQSNVSYHGVLDQKAR. The segment covering 128–142 has biased composition (basic and acidic residues); sequence DQKARQEEVRPKEEI. Disordered regions lie at residues 128-151 and 233-264; these read DQKARQEEVRPKEEISPNPTPTPI and DFAGAPPPSSNSISSTSPHSTLSSPQSTISPT. The segment covering 242–260 has biased composition (low complexity); the sequence is SNSISSTSPHSTLSSPQST. One can recognise an SH3 domain in the interval 266-327; the sequence is KAGFAVKAIY…PANYVQPHKL (62 aa).

The sequence is that of LIM and SH3 domain protein F42H10.3 from Caenorhabditis elegans.